Here is a 98-residue protein sequence, read N- to C-terminus: NADH-ubiquinone oxidoreductase chain 4L (98 aa).

A run of 3 helical transmembrane segments spans residues 1-21 (MTTM…GVFI), 29-49 (TLLC…LILL), and 59-79 (LPLI…ALLV).

The protein belongs to the complex I subunit 4L family. As to quaternary structure, core subunit of respiratory chain NADH dehydrogenase (Complex I) which is composed of 45 different subunits.

Its subcellular location is the mitochondrion inner membrane. It carries out the reaction a ubiquinone + NADH + 5 H(+)(in) = a ubiquinol + NAD(+) + 4 H(+)(out). Its function is as follows. Core subunit of the mitochondrial membrane respiratory chain NADH dehydrogenase (Complex I) which catalyzes electron transfer from NADH through the respiratory chain, using ubiquinone as an electron acceptor. Part of the enzyme membrane arm which is embedded in the lipid bilayer and involved in proton translocation. This Ornithorhynchus anatinus (Duckbill platypus) protein is NADH-ubiquinone oxidoreductase chain 4L (MT-ND4L).